The following is a 474-amino-acid chain: Neuronal acetylcholine receptor subunit eat-2 (474 aa).

An N-terminal signal peptide occupies residues 1–21; it reads MTLKIAFFTLILLVSIERVYS. At 22–237 the chain is on the extracellular side; sequence SDEEYRLLKD…MHLKRRTMYY (216 aa). An N-linked (GlcNAc...) asparagine glycan is attached at asparagine 95. A disulfide bridge connects residues cysteine 149 and cysteine 163. Transmembrane regions (helical) follow at residues 238 to 258, 266 to 286, and 303 to 323; these read GLNW…GFTM, ITLQ…VSEV, and LSIV…NIFF. At 324-440 the chain is on the cytoplasmic side; the sequence is RHPKTHRMGD…WRFMAMVIDR (117 aa). The tract at residues 359 to 378 is disordered; sequence PRREEEKNDEEAGGDGTKLL. The helical transmembrane segment at 441 to 461 threads the bilayer; sequence LSLFLFTGLIFGTTALIFAFC.

This sequence belongs to the ligand-gated ion channel (TC 1.A.9) family. Acetylcholine receptor (TC 1.A.9.1) subfamily. In terms of assembly, neuronal AChR seems to be composed of two different type of subunits: alpha and beta. As to expression, expressed in pharyngeal muscle.

The protein localises to the postsynaptic cell membrane. The protein resides in the cell membrane. Functionally, after binding acetylcholine, the AChR responds by an extensive change in conformation that affects all subunits and leads to opening of an ion-conducting channel across the plasma membrane. Nicotinic acetylcholine receptor in the MC pharyngeal motor neuron involved in pharyngeal pumping. Has a role in the determination of life span possibly via calorific restriction which affects growth rate, although this is independent of metabolic activity. Plays a role in the defense against the accumulation of ingested live pathogenic bacteria in the intestine. In Caenorhabditis elegans, this protein is Neuronal acetylcholine receptor subunit eat-2.